An 86-amino-acid chain; its full sequence is YcgL domain-containing protein Smlt4554 (86 aa).

The region spanning 1 to 85 (MHAYVYKSQL…SVASLMPRHY (85 aa)) is the YcgL domain.

The polypeptide is YcgL domain-containing protein Smlt4554 (Stenotrophomonas maltophilia (strain K279a)).